The primary structure comprises 237 residues: Ribosomal RNA small subunit methyltransferase G (237 aa).

S-adenosyl-L-methionine-binding positions include glycine 78, phenylalanine 83, 129 to 130 (AE), and arginine 148.

Belongs to the methyltransferase superfamily. RNA methyltransferase RsmG family.

The protein resides in the cytoplasm. Functionally, specifically methylates the N7 position of a guanine in 16S rRNA. This chain is Ribosomal RNA small subunit methyltransferase G, found in Streptococcus equi subsp. equi (strain 4047).